Reading from the N-terminus, the 153-residue chain is Ribosome-binding factor A (153 aa).

The disordered stretch occupies residues 116–153 (DAQVAEQAQGAQYAAGEDAYRTPSDEDDAEGPESAPRV). Over residues 119 to 132 (VAEQAQGAQYAAGE) the composition is skewed to low complexity.

This sequence belongs to the RbfA family. As to quaternary structure, monomer. Binds 30S ribosomal subunits, but not 50S ribosomal subunits or 70S ribosomes.

It localises to the cytoplasm. Functionally, one of several proteins that assist in the late maturation steps of the functional core of the 30S ribosomal subunit. Associates with free 30S ribosomal subunits (but not with 30S subunits that are part of 70S ribosomes or polysomes). Required for efficient processing of 16S rRNA. May interact with the 5'-terminal helix region of 16S rRNA. This is Ribosome-binding factor A from Kocuria rhizophila (strain ATCC 9341 / DSM 348 / NBRC 103217 / DC2201).